Here is a 385-residue protein sequence, read N- to C-terminus: Xanthosine methyltransferase 2 (385 aa).

Tyr-18 serves as a coordination point for S-adenosyl-L-homocysteine. The xanthosine site is built by Asn-21 and Asn-25. Positions 62, 67, 101, 102, 140, 141, and 157 each coordinate S-adenosyl-L-homocysteine. Tyr-158 serves as a coordination point for xanthosine. Cys-159 contacts S-adenosyl-L-homocysteine. Positions 161 and 162 each coordinate xanthosine. The Mg(2+) site is built by Asn-179, Asp-261, Phe-263, and Asn-264. Positions 329, 334, and 369 each coordinate xanthosine.

It belongs to the methyltransferase superfamily. Type-7 methyltransferase family. Mg(2+) serves as cofactor. In terms of tissue distribution, expressed at low levels in young leaves but not in mature leaves. Barely detectable in fruits (grains).

It catalyses the reaction xanthosine + S-adenosyl-L-methionine = 7-methylxanthosine + S-adenosyl-L-homocysteine. It functions in the pathway alkaloid biosynthesis. Its function is as follows. Involved in the biosynthesis of caffeine. Specific for xanthosine and could not use xanthosine 5'-monophosphate (XMP) as substrate. Catalyzes the 7-N-methylation activity of xanthosine, but does not have 1-N- or 3-N-methylation activity. This chain is Xanthosine methyltransferase 2, found in Coffea arabica (Arabian coffee).